A 128-amino-acid chain; its full sequence is Aspartate 1-decarboxylase (128 aa).

Ser25 (schiff-base intermediate with substrate; via pyruvic acid) is an active-site residue. Residue Ser25 is modified to Pyruvic acid (Ser). Thr57 is a binding site for substrate. Tyr58 (proton donor) is an active-site residue. 73-75 contributes to the substrate binding site; that stretch reads GSA.

It belongs to the PanD family. Heterooctamer of four alpha and four beta subunits. Pyruvate is required as a cofactor. Is synthesized initially as an inactive proenzyme, which is activated by self-cleavage at a specific serine bond to produce a beta-subunit with a hydroxyl group at its C-terminus and an alpha-subunit with a pyruvoyl group at its N-terminus.

It is found in the cytoplasm. It catalyses the reaction L-aspartate + H(+) = beta-alanine + CO2. It participates in cofactor biosynthesis; (R)-pantothenate biosynthesis; beta-alanine from L-aspartate: step 1/1. Catalyzes the pyruvoyl-dependent decarboxylation of aspartate to produce beta-alanine. In Burkholderia mallei (strain NCTC 10247), this protein is Aspartate 1-decarboxylase.